Reading from the N-terminus, the 155-residue chain is Small ribosomal subunit protein uS7cz/uS7cy (155 aa).

It belongs to the universal ribosomal protein uS7 family. In terms of assembly, part of the 30S ribosomal subunit.

The protein localises to the plastid. It is found in the chloroplast. One of the primary rRNA binding proteins, it binds directly to 16S rRNA where it nucleates assembly of the head domain of the 30S subunit. The protein is Small ribosomal subunit protein uS7cz/uS7cy (rps7-A) of Jasminum nudiflorum (Winter jasmine).